The primary structure comprises 631 residues: UvrABC system protein C (631 aa).

The interval 1–20 is disordered; the sequence is MKNETEAVADQPPKTGPVKP. Residues 34 to 112 enclose the GIY-YIG domain; it reads MSPGVYRMLD…IKQLKPKFNV (79 aa). The UVR domain occupies 222 to 257; the sequence is TDLQRQLADGMAAASEAMEFERAAALRDRIRALTNV.

Belongs to the UvrC family. In terms of assembly, interacts with UvrB in an incision complex.

The protein resides in the cytoplasm. Functionally, the UvrABC repair system catalyzes the recognition and processing of DNA lesions. UvrC both incises the 5' and 3' sides of the lesion. The N-terminal half is responsible for the 3' incision and the C-terminal half is responsible for the 5' incision. The protein is UvrABC system protein C of Jannaschia sp. (strain CCS1).